The sequence spans 516 residues: Probable serine/threonine-protein kinase DDB_G0293276 (516 aa).

The tract at residues 69–115 (SIEIDDENPYNTNNNNNSNNNNNNNNNNCNNSNNSNNNKNINSLDNI) is disordered. Low complexity predominate over residues 79–115 (NTNNNNNSNNNNNNNNNNCNNSNNSNNNKNINSLDNI). In terms of domain architecture, Protein kinase spans 232–479 (YKHVECIGKG…SKDIKNHPYF (248 aa)). ATP contacts are provided by residues 238-246 (IGKGGYGVV) and Lys-261. The active-site Proton acceptor is Asp-350.

This sequence belongs to the protein kinase superfamily. AGC Ser/Thr protein kinase family.

The catalysed reaction is L-seryl-[protein] + ATP = O-phospho-L-seryl-[protein] + ADP + H(+). It catalyses the reaction L-threonyl-[protein] + ATP = O-phospho-L-threonyl-[protein] + ADP + H(+). The chain is Probable serine/threonine-protein kinase DDB_G0293276 from Dictyostelium discoideum (Social amoeba).